Consider the following 143-residue polypeptide: Putative pre-16S rRNA nuclease (143 aa).

The protein belongs to the YqgF nuclease family.

Its subcellular location is the cytoplasm. Could be a nuclease involved in processing of the 5'-end of pre-16S rRNA. In Lactococcus lactis subsp. cremoris (strain SK11), this protein is Putative pre-16S rRNA nuclease.